Consider the following 250-residue polypeptide: Probable transcriptional regulatory protein Cpha266_0538 (250 aa).

This sequence belongs to the TACO1 family.

It localises to the cytoplasm. The protein is Probable transcriptional regulatory protein Cpha266_0538 of Chlorobium phaeobacteroides (strain DSM 266 / SMG 266 / 2430).